The primary structure comprises 251 residues: Transmembrane ascorbate-dependent reductase CYB561 (251 aa).

M1 bears the N-acetylmethionine mark. At 1-16 (MEGGAAAATPTALPYY) the chain is on the cytoplasmic side. A helical transmembrane segment spans residues 17–37 (VAFSQLLGLTLVAMTGAWLGL). In terms of domain architecture, Cytochrome b561 spans 19–220 (FSQLLGLTLV…FGGAVLYILT (202 aa)). At 38–51 (YRGGIAWESDLQFN) the chain is on the vesicular side. Residues 52–72 (AHPLCMVIGLIFLQGNALLVY) form a helical membrane-spanning segment. Heme b contacts are provided by H53, R73, and K80. Over 73 to 85 (RVFRNEAKRTTKV) the chain is Cytoplasmic. Residues K80 and K84 each contribute to the L-ascorbate site. The chain crosses the membrane as a helical span at residues 86–106 (LHGLLHIFALVIALVGLVAVF). Heme b-binding positions include H87, 116-119 (DLYS), and H121. Topologically, residues 107–124 (DYHRKKGYADLYSLHSWC) are vesicular. Residues 125 to 145 (GILVFVLYFVQWLVGFSFFLF) form a helical membrane-spanning segment. The Cytoplasmic segment spans residues 146–158 (PGASFSLRSRYRP). R153 contributes to the L-ascorbate binding site. The chain crosses the membrane as a helical span at residues 159 to 179 (QHIFFGATIFLLSVGTALLGL). Residues H160 and E181 each contribute to the heme b site. The Vesicular segment spans residues 180-198 (KEALLFNLGGKYSAFEPEG). A helical membrane pass occupies residues 199–219 (VLANVLGLLLACFGGAVLYIL). The Cytoplasmic portion of the chain corresponds to 220 to 251 (TRADWKRPSQAEEQALSMDFKTLTEGDSPGSQ). K225 is a heme b binding site. Phosphoserine is present on S247.

Heme b is required as a cofactor. As to expression, expressed in many tissues, in particular the brain especially in the cortex and hippocampus.

It is found in the cytoplasmic vesicle. The protein localises to the secretory vesicle. Its subcellular location is the chromaffin granule membrane. The catalysed reaction is monodehydro-L-ascorbate radical(out) + L-ascorbate(in) = monodehydro-L-ascorbate radical(in) + L-ascorbate(out). Transmembrane reductase that uses ascorbate as an electron donor in the cytoplasm and transfers electrons across membranes to reduce monodehydro-L-ascorbate radical in the lumen of secretory vesicles. It is therefore involved the regeneration and homeostasis within secretory vesicles of ascorbate which in turn provides reducing equivalents needed to support the activity of intravesicular enzymes. The protein is Transmembrane ascorbate-dependent reductase CYB561 of Homo sapiens (Human).